The primary structure comprises 68 residues: ATP synthase F(0) complex subunit 8 (68 aa).

Residues 8-24 (VWPTTITPMLLTLFLIT) traverse the membrane as a helical segment. At K54 the chain carries N6-acetyllysine; alternate. Residue K54 is modified to N6-succinyllysine; alternate. K57 carries the N6-acetyllysine modification.

This sequence belongs to the ATPase protein 8 family. Component of the ATP synthase complex composed at least of ATP5F1A/subunit alpha, ATP5F1B/subunit beta, ATP5MC1/subunit c (homooctomer), MT-ATP6/subunit a, MT-ATP8/subunit 8, ATP5ME/subunit e, ATP5MF/subunit f, ATP5MG/subunit g, ATP5MK/subunit k, ATP5MJ/subunit j, ATP5F1C/subunit gamma, ATP5F1D/subunit delta, ATP5F1E/subunit epsilon, ATP5PF/subunit F6, ATP5PB/subunit b, ATP5PD/subunit d, ATP5PO/subunit OSCP. ATP synthase complex consists of a soluble F(1) head domain (subunits alpha(3) and beta(3)) - the catalytic core - and a membrane F(0) domain - the membrane proton channel (subunits c, a, 8, e, f, g, k and j). These two domains are linked by a central stalk (subunits gamma, delta, and epsilon) rotating inside the F1 region and a stationary peripheral stalk (subunits F6, b, d, and OSCP). Interacts with PRICKLE3.

It is found in the mitochondrion membrane. Its function is as follows. Subunit 8, of the mitochondrial membrane ATP synthase complex (F(1)F(0) ATP synthase or Complex V) that produces ATP from ADP in the presence of a proton gradient across the membrane which is generated by electron transport complexes of the respiratory chain. ATP synthase complex consist of a soluble F(1) head domain - the catalytic core - and a membrane F(1) domain - the membrane proton channel. These two domains are linked by a central stalk rotating inside the F(1) region and a stationary peripheral stalk. During catalysis, ATP synthesis in the catalytic domain of F(1) is coupled via a rotary mechanism of the central stalk subunits to proton translocation. In vivo, can only synthesize ATP although its ATP hydrolase activity can be activated artificially in vitro. Part of the complex F(0) domain. The chain is ATP synthase F(0) complex subunit 8 from Pan paniscus (Pygmy chimpanzee).